We begin with the raw amino-acid sequence, 83 residues long: Cytochrome b559 subunit alpha (83 aa).

A helical transmembrane segment spans residues 21–35; it reads VIHSITIPSLFIAGW. His23 contributes to the heme binding site.

This sequence belongs to the PsbE/PsbF family. Heterodimer of an alpha subunit and a beta subunit. PSII is composed of 1 copy each of membrane proteins PsbA, PsbB, PsbC, PsbD, PsbE, PsbF, PsbH, PsbI, PsbJ, PsbK, PsbL, PsbM, PsbT, PsbX, PsbY, PsbZ, Psb30/Ycf12, at least 3 peripheral proteins of the oxygen-evolving complex and a large number of cofactors. It forms dimeric complexes. Requires heme b as cofactor.

The protein resides in the plastid. It localises to the chloroplast thylakoid membrane. This b-type cytochrome is tightly associated with the reaction center of photosystem II (PSII). PSII is a light-driven water:plastoquinone oxidoreductase that uses light energy to abstract electrons from H(2)O, generating O(2) and a proton gradient subsequently used for ATP formation. It consists of a core antenna complex that captures photons, and an electron transfer chain that converts photonic excitation into a charge separation. This Citrus sinensis (Sweet orange) protein is Cytochrome b559 subunit alpha.